A 423-amino-acid polypeptide reads, in one-letter code: Protein CLP1 homolog (423 aa).

Residues Glu-16, Lys-57, and Asp-119–Thr-124 each bind ATP.

The protein belongs to the Clp1 family. Clp1 subfamily.

It localises to the nucleus. Its function is as follows. Required for endonucleolytic cleavage during polyadenylation-dependent pre-mRNA 3'-end formation. This Drosophila simulans (Fruit fly) protein is Protein CLP1 homolog (cbc).